Reading from the N-terminus, the 426-residue chain is Putative acid phosphatase 1 (426 aa).

The first 18 residues, 1 to 18, serve as a signal peptide directing secretion; it reads MRVLFYVSILVIIASVHT. Residues 19-388 lie on the Extracellular side of the membrane; the sequence is QLISVHVIFR…SEWVMTPLSW (370 aa). His-29 acts as the Nucleophile in catalysis. Asn-37 and Asn-145 each carry an N-linked (GlcNAc...) asparagine glycan. A disulfide bridge links Cys-133 with Cys-369. The active-site Proton donor is the Asp-276. A helical membrane pass occupies residues 389–409; the sequence is IIVAIAILLLIALILMTYFVI. Residues 410–426 lie on the Cytoplasmic side of the membrane; the sequence is RYKNRSIVNIKKLSLEN.

This sequence belongs to the histidine acid phosphatase family.

The protein resides in the membrane. It catalyses the reaction a phosphate monoester + H2O = an alcohol + phosphate. The protein is Putative acid phosphatase 1 of Caenorhabditis elegans.